The primary structure comprises 367 residues: 2-aminoethylphosphonate--pyruvate transaminase (367 aa).

K193 bears the N6-(pyridoxal phosphate)lysine mark.

This sequence belongs to the class-V pyridoxal-phosphate-dependent aminotransferase family. PhnW subfamily. As to quaternary structure, homodimer. The cofactor is pyridoxal 5'-phosphate.

The catalysed reaction is (2-aminoethyl)phosphonate + pyruvate = phosphonoacetaldehyde + L-alanine. Functionally, involved in phosphonate degradation. This is 2-aminoethylphosphonate--pyruvate transaminase from Vibrio parahaemolyticus serotype O3:K6 (strain RIMD 2210633).